A 388-amino-acid polypeptide reads, in one-letter code: MNLHEYQGKQLFAEYGLPVSKGFAVDTPEEAAEACEKIGGSEWVVKAQVHAGGRGKAGGVKLVKSKEDAKAFAANWLGKRLVTYQTDANGQPVSKILVESCTDIAKELYLGAVVDRSSRRIVFMASTEGGVDIEKVAHETPEKILKATIDPLVGAQPYQGRELAFQLGLEGDQVKQFTHIFVGLAKLFQDYDLALLEVNPLVIKADGNLHCLDAKINIDSNAMYRQPKLRAMHDPSQDDPREAHAQKWELNYVALEGNIGCMVNGAGLAMGTMDIVNLHGGQPANFLDVGGGATKERVTEAFKIILSDDNVKAVLVNIFGGIVRCDMIAEGIIGAVKEVGVKIPVVVRLEGNNAELGAKVLADSGLNIIAATSLTDAAQQVVKAAEGK.

The 236-residue stretch at 9–244 folds into the ATP-grasp domain; it reads KQLFAEYGLP…PSQDDPREAH (236 aa). ATP is bound by residues lysine 46, 53–55, glutamate 99, threonine 102, and glutamate 107; that span reads GRG. Residues asparagine 199 and aspartate 213 each contribute to the Mg(2+) site. Residues asparagine 264 and 321–323 each bind substrate; that span reads GIV.

Belongs to the succinate/malate CoA ligase beta subunit family. Heterotetramer of two alpha and two beta subunits. Mg(2+) is required as a cofactor.

It catalyses the reaction succinate + ATP + CoA = succinyl-CoA + ADP + phosphate. The enzyme catalyses GTP + succinate + CoA = succinyl-CoA + GDP + phosphate. Its pathway is carbohydrate metabolism; tricarboxylic acid cycle; succinate from succinyl-CoA (ligase route): step 1/1. Functionally, succinyl-CoA synthetase functions in the citric acid cycle (TCA), coupling the hydrolysis of succinyl-CoA to the synthesis of either ATP or GTP and thus represents the only step of substrate-level phosphorylation in the TCA. The beta subunit provides nucleotide specificity of the enzyme and binds the substrate succinate, while the binding sites for coenzyme A and phosphate are found in the alpha subunit. The protein is Succinate--CoA ligase [ADP-forming] subunit beta of Ectopseudomonas mendocina (strain ymp) (Pseudomonas mendocina).